The chain runs to 1993 residues: Otoferlin (1993 aa).

Positions Met-1 to Asp-98 constitute a C2 1 domain. Over Met-1 to Lys-1959 the chain is Cytoplasmic. The interval Pro-127 to Pro-212 is disordered. Over residues Asp-129 to Asp-145 the composition is skewed to acidic residues. Basic and acidic residues-rich tracts occupy residues Pro-163 to Ala-186 and His-202 to Glu-211. 2 consecutive C2 domains span residues Lys-251–Ala-372 and Ile-415–Thr-546. The tract at residues Asn-654–Pro-708 is disordered. Positions Gly-675 to Gly-695 are enriched in acidic residues. Residues Arg-807–Val-836 are a coiled coil. 2 consecutive C2 domains span residues Leu-959–Phe-1084 and Arg-1131–Asn-1257. Ca(2+) contacts are provided by Asp-991, Asp-997, Asp-1053, Asp-1055, and Asp-1061. Disordered regions lie at residues Ala-1294–Asp-1318 and Leu-1339–Lys-1398. The segment covering Asp-1348 to Ser-1357 has biased composition (acidic residues). A compositionally biased stretch (basic and acidic residues) spans Lys-1366–Lys-1379. 2 C2 domains span residues Leu-1460–Gly-1589 and Asp-1710–Thr-1861. Residues Asp-1504, Asp-1510, Asp-1559, Asp-1561, Asp-1567, Asp-1832, Ser-1835, and Asp-1838 each contribute to the Ca(2+) site. The helical transmembrane segment at Trp-1960–Tyr-1980 threads the bilayer. Over Ser-1981–Ala-1993 the chain is Extracellular.

The protein belongs to the ferlin family. In terms of assembly, interacts with SNAP25; the interaction is direct. Interacts with STX1; the interaction is direct. Interacts with RAB8B. Ca(2+) is required as a cofactor. Isoform 1 is expressed in the cochlea and brain. Expressed in cerebellum (Purkinje cells), hippocampus (granule cells of the dentate gyrus and in pyramidal cells of the CA1-CA3 region) and cortex (stellate and pyramidal cells). Expressed in hair cells of vestibular organs such as the saccule, utricle and crista ampullari. Expressed in the cochlear inner and outer cells (IHCs and OHCs) (at protein level). Expressed in brain: brainstem, cerebellum (granules cells and Purkinje cell layer), cortex (layers IV and V), inferior colliculus, superior colliculus and hippocampus (granule cells of the dentate gyrus and in pyramidal cells of the CA1-CA3 region).

The protein localises to the cytoplasmic vesicle. It localises to the secretory vesicle. It is found in the synaptic vesicle membrane. Its subcellular location is the basolateral cell membrane. The protein resides in the endoplasmic reticulum membrane. The protein localises to the golgi apparatus membrane. It localises to the presynaptic cell membrane. It is found in the cell membrane. Key calcium ion sensor involved in the Ca(2+)-triggered synaptic vesicle-plasma membrane fusion and in the control of neurotransmitter release at these output synapses. Interacts in a calcium-dependent manner to the presynaptic SNARE proteins at ribbon synapses of cochlear inner hair cells (IHCs) to trigger exocytosis of neurotransmitter. Also essential to synaptic exocytosis in immature outer hair cells (OHCs). May also play a role within the recycling of endosomes. This is Otoferlin (Otof) from Rattus norvegicus (Rat).